A 319-amino-acid polypeptide reads, in one-letter code: uncharacterized protein (319 aa).

Residues 29 to 164 (VNISSLALLK…LDAFRSVNPL (136 aa)) form the MPN domain. Positions 111, 113, and 124 each coordinate Zn(2+). The short motif at 111–124 (HSHPGFGCWLSSVD) is the JAMM motif element.

Belongs to the peptidase M67A family.

This is an uncharacterized protein from Caenorhabditis elegans.